We begin with the raw amino-acid sequence, 671 residues long: MSKSFKLHSVFKPAGDQPEAIRKLEEGLENGLAHQTLLGVTGSGKTFTVANVIADLNRPTMILAPNKTLAAQLYGEMKEFFPDNAVEYFVSYYDYYQPEAYVPSSDTFIEKDASVNEHIEQMRLSATKALLERRDVVVVASVSAIYGLGDPDLYLKMMLHLTRGMIIDQRSILRRLSELQYSRNDQVFQRGTFRVRGEVIDIFPAESDEWALRVELFDEEVERLSIFDPLTGQLQHEVPRFTVYPKTHYVTPRERILQAMEEIKVELAERRQVLLANNKLLEEQRLSQRTQFDLEMMNELGYCSGIENYSRYLSGRGPGEAPPTLFDYLPADGLLIVDESHVTIPQIGGMYKGDRSRKETLVEYGFRLPSALDNRPMRFEEFEALAPQTIYVSATPGKYELEKSGGDIIEQVVRPTGLLDPLIEVRPVATQVDDLLSEIRIRAAINERVLVTTLTKRMAEDLTDYLSEHGAKVRYLHSDIDTVERVEIIRDLRLGEFDVLVGINLLREGLDMPEVSLVAILDADKEGFLRSERSLIQTIGRAARNLNGKAILYGDRITASMEKAIGETERRRAKQQAYNEERRIIPQGLNKKIGDILQLGQPSMRGKGKGRGSHKMADTTQYQSLSPKALDQKIRELEAKMYTYAQNLEFEQAAELRDQVHQLRQQFIAIS.

The 389-residue stretch at Glu-26–Arg-414 folds into the Helicase ATP-binding domain. Gly-39 to Thr-46 is a binding site for ATP. The Beta-hairpin signature appears at Tyr-92–Val-115. Residues Gln-431–Ile-593 enclose the Helicase C-terminal domain. The UVR domain maps to Asp-631–Gln-666.

Belongs to the UvrB family. As to quaternary structure, forms a heterotetramer with UvrA during the search for lesions. Interacts with UvrC in an incision complex.

It is found in the cytoplasm. Its function is as follows. The UvrABC repair system catalyzes the recognition and processing of DNA lesions. A damage recognition complex composed of 2 UvrA and 2 UvrB subunits scans DNA for abnormalities. Upon binding of the UvrA(2)B(2) complex to a putative damaged site, the DNA wraps around one UvrB monomer. DNA wrap is dependent on ATP binding by UvrB and probably causes local melting of the DNA helix, facilitating insertion of UvrB beta-hairpin between the DNA strands. Then UvrB probes one DNA strand for the presence of a lesion. If a lesion is found the UvrA subunits dissociate and the UvrB-DNA preincision complex is formed. This complex is subsequently bound by UvrC and the second UvrB is released. If no lesion is found, the DNA wraps around the other UvrB subunit that will check the other stand for damage. This is UvrABC system protein B from Yersinia pestis.